A 213-amino-acid polypeptide reads, in one-letter code: Imidazole glycerol phosphate synthase subunit HisH 1 (213 aa).

A Glutamine amidotransferase type-1 domain is found at 3-213; it reads SVSIVDYGVG…LSIIQQFLQI (211 aa). Cys81 (nucleophile) is an active-site residue. Catalysis depends on residues His195 and Glu197.

In terms of assembly, heterodimer of HisH and HisF.

Its subcellular location is the cytoplasm. It carries out the reaction 5-[(5-phospho-1-deoxy-D-ribulos-1-ylimino)methylamino]-1-(5-phospho-beta-D-ribosyl)imidazole-4-carboxamide + L-glutamine = D-erythro-1-(imidazol-4-yl)glycerol 3-phosphate + 5-amino-1-(5-phospho-beta-D-ribosyl)imidazole-4-carboxamide + L-glutamate + H(+). The enzyme catalyses L-glutamine + H2O = L-glutamate + NH4(+). Its pathway is amino-acid biosynthesis; L-histidine biosynthesis; L-histidine from 5-phospho-alpha-D-ribose 1-diphosphate: step 5/9. IGPS catalyzes the conversion of PRFAR and glutamine to IGP, AICAR and glutamate. The HisH subunit provides the glutamine amidotransferase activity that produces the ammonia necessary to HisF for the synthesis of IGP and AICAR. The protein is Imidazole glycerol phosphate synthase subunit HisH 1 of Legionella pneumophila (strain Paris).